Reading from the N-terminus, the 1372-residue chain is MNKVYSLKYCPVTGGLIAVSELARRVIKKTCRRLTHILLAGIPAICLCYSQISQAGIVRSDIAYQIYRDFAENKGLFVPGANDIPVYDKDGKLVGRLGKAPMADFSSVSSNGVATLVSPQYIVSVKHNGGYRSVSFGNGKNTYSLVDRNNHPSIDFHAPRLNKLVTEVIPSAVTSEGTKANAYKYTERYTAFYRVGSGTQYTKDKDGNLVKVAGGYAFKTGGTTGVPLISDATIVSNPGQTYNPVNGPLPDYGAPGDSGSPLFAYDKQQKKWVIVAVLRAYAGINGATNWWNVIPTDYLNQVMQDDFDAPVDFVSGLGPLNWTYDKTSGTGTLSQGSKNWTMHGQKDNDLNAGKNLVFSGQNGAIILKDSVTQGAGYLEFKDSYTVSAESGKTWTGAGIITDKGTNVTWKVNGVAGDNLHKLGEGTLTINGTGVNPGGLKTGDGIVVLNQQADTAGNIQAFSSVNLASGRPTVVLGDARQVNPDNISWGYRGGKLDLNGNAVTFTRLQAADYGAVITNNAQQKSQLLLDLKAQDTNVSEPTIGNISPFGGTGTPGNLYSMILNSQTRFYILKSASYGNTLWGNSLNDPAQWEFVGMNKNKAVQTVKDRILAGRAKQPVIFHGQLTGNMDVAIPQVPGGRKVIFDGSVNLPEGTLSQDSGTLIFQGHPVIHASISGSAPVSLNQKDWENRQFTMKTLSLKDADFHLSRNASLNSDIKSDNSHITLGSDRAFVDKNDGTGNYVIPEEGTSVPDTVNDRSQYEGNITLNHNSALDIGSRFTGGIDAYDSAVSITSPDVLLTAPGAFAGSSLTVHDGGHLTALNGLFSDGHIQAGKNGKITLSGTPVKDTANQYAPAVYLTDGYDLTGDNAALEITRGAHASGDIHASAASTVTIGSDTPAELASAETAASAFAGSLLEGYNAAFNGAITGGRADVSMHNALWTLGGDSAIHSLTVRNSRISSEGDRTFRTLTVNKLDATGSDFVLRTDLKNADKINVTEKATGSDNSLNVSFMNNPAQGQALNIPLVTAPAGTSAEMFKAGTRVTGFSRVTPTLHVDTSGGNTKWILDGFKAEADKAAAAKADSFMNAGYKNFMTEVNNLNKRMGDLRDTNGDAGAWARIMSGAGSADGGYSDNYTHVQVGFDKKHELDGVDLFTGVTMTYTDSSADSHAFSGKTKSVGGGLYASALFESGAYIDLIGKYIHHDNDYTGNFASLGTKHYNTHSWYAGAETGYRYHLTEDTFIEPQAELVYGAVSGKTFRWKDGDMDLSMKNRDFSPLVGRTGVELGKTFSGKDWSVTARAGTSWQFDLLNNGETVLRDASGEKRIKGEKDSRMLFNVGMNAQIKDNMRFGLEFEKSAFGKYNVDNAVNANFRYMF.

The N-terminal stretch at 1–55 is a signal peptide; it reads MNKVYSLKYCPVTGGLIAVSELARRVIKKTCRRLTHILLAGIPAICLCYSQISQA. The Peptidase S6 domain occupies 56–301; it reads GIVRSDIAYQ…NVIPTDYLNQ (246 aa). Active-site charge relay system residues include H127, D155, and S258. Positions 1106–1372 constitute an Autotransporter domain; that stretch reads DTNGDAGAWA…AVNANFRYMF (267 aa).

In terms of processing, cleaved to release the mature protein from the outer membrane.

It is found in the periplasm. It localises to the secreted. The protein resides in the cell surface. The protein localises to the cell outer membrane. Functionally, involved in intestinal colonization, displays in vitro mucinolytic activity, serum resistance, and hemagglutination. Important to penetrate the intestinal mucus layer. This Shigella flexneri protein is Serine protease pic autotransporter (pic).